The chain runs to 349 residues: Phosphoribosylformylglycinamidine cyclo-ligase (349 aa).

It belongs to the AIR synthase family.

The protein resides in the cytoplasm. The catalysed reaction is 2-formamido-N(1)-(5-O-phospho-beta-D-ribosyl)acetamidine + ATP = 5-amino-1-(5-phospho-beta-D-ribosyl)imidazole + ADP + phosphate + H(+). It functions in the pathway purine metabolism; IMP biosynthesis via de novo pathway; 5-amino-1-(5-phospho-D-ribosyl)imidazole from N(2)-formyl-N(1)-(5-phospho-D-ribosyl)glycinamide: step 2/2. The sequence is that of Phosphoribosylformylglycinamidine cyclo-ligase from Albidiferax ferrireducens (strain ATCC BAA-621 / DSM 15236 / T118) (Rhodoferax ferrireducens).